The primary structure comprises 36 residues: U-limacoditoxin(7)-Dv63 (36 aa).

Positions 1 to 19 (MFKPRVILLITIIAVFSEF) are cleaved as a signal peptide.

The protein belongs to the limacoditoxin-7 family. As to expression, expressed by the venom secretory cell of the spine. The spine is a cuticular structure containing a single large nucleated venom-secreting cell at its base. It is an independent unit capable of producing, storing and injecting venom. On the back of D.vulnerans caterpillars, spines are grouped together by 50 to 100 to form scoli, of which there are eight in D.vulnerans.

It is found in the secreted. Its function is as follows. Peptide with insecticidal and antiparasitic activities. Induces irreversible paralysis in D.melanogaster when tested at high doses. It shows a moderate antiparasitic activity against the major pathogenic nematode of ruminants (H.contortus, EC(50)=41.3 uM). Does not show antimicrobial activities. Does not induce increase in intracellular calcium in mouse DRG neurons, suggesting that it does not induce pain. The polypeptide is U-limacoditoxin(7)-Dv63 (Doratifera vulnerans (Mottled cup moth)).